Consider the following 941-residue polypeptide: Protocadherin alpha-12 (941 aa).

The first 29 residues, 1–29, serve as a signal peptide directing secretion; sequence MVIIGPRGPGSQRLLLSLLLLAAWEVGSG. 6 Cadherin domains span residues 30-133, 134-242, 243-350, 351-455, 456-565, and 581-678; these read QLHY…PPVF, RERE…GPAF, DKPS…VPEV, MVTS…APAF, AQPE…APAL, and VPRS…APKT. The Extracellular portion of the chain corresponds to 30 to 697; it reads QLHYSVYEEA…DPEAALVDIN (668 aa). N-linked (GlcNAc...) asparagine glycans are attached at residues asparagine 257 and asparagine 265. An N-linked (GlcNAc...) asparagine glycan is attached at asparagine 548. The helical transmembrane segment at 698–718 threads the bilayer; sequence VYLIIAICAVSSLLVLTLLLY. Topologically, residues 719 to 941 are cytoplasmic; it reads TALRCSAPPT…GNSTTDNSDQ (223 aa). PXXP repeat units follow at residues 734–737, 790–793, 823–826, 863–866, and 882–885; these read PGKP, PRQP, PGGP, GPGN, and PGSP. Positions 734–885 are 5 X 4 AA repeats of P-X-X-P; that stretch reads PGKPTLVCSS…PDKFIIPGSP (152 aa). The tract at residues 818 to 941 is disordered; the sequence is ILRAGPGGPD…GNSTTDNSDQ (124 aa). The segment covering 900-914 has biased composition (basic and acidic residues); that stretch reads DKSDFITFGKKEETK.

It localises to the cell membrane. Its function is as follows. Potential calcium-dependent cell-adhesion protein. May be involved in the establishment and maintenance of specific neuronal connections in the brain. In Pan troglodytes (Chimpanzee), this protein is Protocadherin alpha-12 (PCDHA12).